The following is a 537-amino-acid chain: CTP synthase (537 aa).

Residues 1 to 268 (MPFKCIFLTG…ANFIGEKLKL (268 aa)) form an amidoligase domain region. Serine 14 serves as a coordination point for CTP. Serine 14 contributes to the UTP binding site. ATP-binding positions include 15–20 (SLGKGL) and aspartate 72. Residues aspartate 72 and glutamate 142 each contribute to the Mg(2+) site. CTP-binding positions include 149–151 (DIE), 188–193 (KSKPTQ), and lysine 224. UTP-binding positions include 188-193 (KSKPTQ) and lysine 224. Residues 293 to 533 (KIGVVGKYVQ…IEAALVYSKD (241 aa)) enclose the Glutamine amidotransferase type-1 domain. Glycine 352 contributes to the L-glutamine binding site. Cysteine 379 serves as the catalytic Nucleophile; for glutamine hydrolysis. Residues 380–383 (LGMQ), glutamate 403, and arginine 461 contribute to the L-glutamine site. Active-site residues include histidine 506 and glutamate 508.

The protein belongs to the CTP synthase family. As to quaternary structure, homotetramer.

The enzyme catalyses UTP + L-glutamine + ATP + H2O = CTP + L-glutamate + ADP + phosphate + 2 H(+). It catalyses the reaction L-glutamine + H2O = L-glutamate + NH4(+). It carries out the reaction UTP + NH4(+) + ATP = CTP + ADP + phosphate + 2 H(+). Its pathway is pyrimidine metabolism; CTP biosynthesis via de novo pathway; CTP from UDP: step 2/2. With respect to regulation, allosterically activated by GTP, when glutamine is the substrate; GTP has no effect on the reaction when ammonia is the substrate. The allosteric effector GTP functions by stabilizing the protein conformation that binds the tetrahedral intermediate(s) formed during glutamine hydrolysis. Inhibited by the product CTP, via allosteric rather than competitive inhibition. Functionally, catalyzes the ATP-dependent amination of UTP to CTP with either L-glutamine or ammonia as the source of nitrogen. Regulates intracellular CTP levels through interactions with the four ribonucleotide triphosphates. This chain is CTP synthase, found in Chlamydia pneumoniae (Chlamydophila pneumoniae).